We begin with the raw amino-acid sequence, 80 residues long: Large ribosomal subunit protein bL31B (80 aa).

This sequence belongs to the bacterial ribosomal protein bL31 family. Type B subfamily. Part of the 50S ribosomal subunit.

The polypeptide is Large ribosomal subunit protein bL31B (Exiguobacterium sp. (strain ATCC BAA-1283 / AT1b)).